A 152-amino-acid polypeptide reads, in one-letter code: Deoxyuridine 5'-triphosphate nucleotidohydrolase (152 aa).

Substrate-binding positions include 71–73 (RSG), Asn84, 88–90 (LID), and Met98.

It belongs to the dUTPase family. It depends on Mg(2+) as a cofactor.

It carries out the reaction dUTP + H2O = dUMP + diphosphate + H(+). It participates in pyrimidine metabolism; dUMP biosynthesis; dUMP from dCTP (dUTP route): step 2/2. In terms of biological role, this enzyme is involved in nucleotide metabolism: it produces dUMP, the immediate precursor of thymidine nucleotides and it decreases the intracellular concentration of dUTP so that uracil cannot be incorporated into DNA. This chain is Deoxyuridine 5'-triphosphate nucleotidohydrolase, found in Shewanella amazonensis (strain ATCC BAA-1098 / SB2B).